Here is a 166-residue protein sequence, read N- to C-terminus: Pyruvoyl-dependent arginine decarboxylase (166 aa).

Ser45 carries the pyruvic acid (Ser) modification.

The protein belongs to the PdaD family. Pyruvate is required as a cofactor.

It catalyses the reaction L-arginine + H(+) = agmatine + CO2. This Methanocella arvoryzae (strain DSM 22066 / NBRC 105507 / MRE50) protein is Pyruvoyl-dependent arginine decarboxylase.